We begin with the raw amino-acid sequence, 1777 residues long: FERM and PDZ domain-containing protein 3 (1777 aa).

Residues 21–98 (QVTVHRDPIY…FIVLTVLHTH (78 aa)) form the PDZ domain. Residues 147–461 (NVLKVFLENG…GYCRLLLDSR (315 aa)) enclose the FERM domain. Disordered regions lie at residues 491–520 (TGGH…TPPP), 555–574 (ETRP…QGYE), 622–697 (QLGP…GRHL), 832–871 (SLGR…QGER), 1014–1216 (SAPE…PFRL), 1309–1346 (RPQA…LSSP), and 1732–1765 (QQQQ…ATVM). Residues 502 to 511 (YVGSVGTSPR) are compositionally biased toward polar residues. The span at 555–564 (ETRPRTKSDP) shows a compositional bias: basic and acidic residues. The span at 649 to 659 (SEEEEEEEDET) shows a compositional bias: acidic residues. 4 stretches are compositionally biased toward polar residues: residues 840 to 850 (PSLQPIATGQS), 1015 to 1035 (APET…SSPR), 1046 to 1056 (HLSQQEDSLPV), and 1094 to 1111 (LQKQ…QLES). Residues 1134 to 1168 (QSPSCQSRSHSPSCQPHGHSPSSQSRGQSPSCQPR) are compositionally biased toward low complexity. Residues 1172 to 1202 (PLRSQAASRQVSTMPSRKLETTLNGAHSTSE) are compositionally biased toward polar residues. The span at 1732–1751 (QQQQQQQQQQQQVAAAAGAA) shows a compositional bias: low complexity.

The polypeptide is FERM and PDZ domain-containing protein 3 (Homo sapiens (Human)).